The primary structure comprises 152 residues: Protein-export protein SecB (152 aa).

Belongs to the SecB family. Homotetramer, a dimer of dimers. One homotetramer interacts with 1 SecA dimer.

The protein resides in the cytoplasm. One of the proteins required for the normal export of preproteins out of the cell cytoplasm. It is a molecular chaperone that binds to a subset of precursor proteins, maintaining them in a translocation-competent state. It also specifically binds to its receptor SecA. This chain is Protein-export protein SecB, found in Verminephrobacter eiseniae (strain EF01-2).